The chain runs to 251 residues: Mycofactocin precursor peptide peptidase (251 aa).

Residues E38, H40, D49, H128, and E167 each coordinate a divalent metal cation.

This sequence belongs to the creatininase superfamily. As to quaternary structure, homooctamer. Requires Fe(2+) as cofactor. The cofactor is Zn(2+).

The enzyme catalyses [mycofactocin precursor peptide]-C-terminal glycyl-N-{5-[(4-hydroxyphenyl)methyl]-4,4-dimethyl-2-oxopyrrolidin-3-yl}acetamide + H2O = [mycofactocin precursor peptide]-C-terminal glycine + 3-amino-5-[(4-hydroxyphenyl)methyl]-4,4-dimethyl-2-pyrrolidin-2-one. In terms of biological role, peptidase involved in the biosynthesis of the enzyme cofactor mycofactocin (MFT). Catalyzes cleavage of the MftC-modified MftA peptide to liberate its final two residues, which consist of a cross-linked valine-decarboxylated tyrosine dipeptide (named 3-amino-5-[(4-hydroxyphenyl)methyl]-4,4-dimethyl-2-pyrrolidin-2-one or ADHP). The polypeptide is Mycofactocin precursor peptide peptidase (mftE) (Mycobacterium tuberculosis (strain CDC 1551 / Oshkosh)).